The primary structure comprises 1374 residues: Alpha,alpha-trehalose-phosphate synthase [UDP-forming] 1 (1374 aa).

Disordered regions lie at residues 28–66 (DTGK…SDKD), 86–117 (YTPG…DDEG), and 1352–1374 (KADS…SKQQ). Composition is skewed to basic and acidic residues over residues 56-66 (DPFDRPKSDKD) and 86-95 (YTPGKEKGVD). Acidic residues-rich tracts occupy residues 96–109 (QDES…EDHD) and 1356–1368 (YYDD…DQED).

It in the N-terminal section; belongs to the glycosyltransferase 20 family. This sequence in the C-terminal section; belongs to the gob-1 trehalose phosphatase family.

It carries out the reaction D-glucose 6-phosphate + UDP-alpha-D-glucose = alpha,alpha-trehalose 6-phosphate + UDP + H(+). Its function is as follows. Catalyzes the production of trehalose from glucose-6-phosphate and UDP-alpha-D-glucose in a 2 step process. This chain is Alpha,alpha-trehalose-phosphate synthase [UDP-forming] 1 (tps-1), found in Caenorhabditis briggsae.